Consider the following 1349-residue polypeptide: Membrane-associated phosphatidylinositol transfer protein 2 (1349 aa).

The interval 262–344 (EDGEEATELV…RDSDESSDDE (83 aa)) is disordered. Residues 302–322 (KQWSTSSKSSRSSKRGASPSR) show a composition bias toward low complexity. S337, S341, S368, and S589 each carry phosphoserine. Residues 618–631 (GGGGGSSGGGGSSG) are compositionally biased toward gly residues. Positions 618–671 (GGGGGSSGGGGSSGGSSLESSRHLSRSNVDIPRSNGTEDPKRQLPRKRSDSSTY) are disordered. Residue S644 is modified to Phosphoserine. Over residues 653 to 667 (GTEDPKRQLPRKRSD) the composition is skewed to basic and acidic residues. S700, S701, and S702 each carry phosphoserine. The DDHD domain maps to 715-963 (FDFEITDLFL…VSFLLRQVMR (249 aa)). R828 carries the post-translational modification Omega-N-methylarginine. The segment at 876–900 (LPAPSPTTPGPHPPARKASPGLERA) is disordered. Pro residues predominate over residues 878-888 (APSPTTPGPHP). Residue S1277 is modified to Phosphoserine. The interval 1296-1326 (TISAQPSGPSHRHERTQSQADGEQRGQRSMS) is disordered.

Belongs to the PtdIns transfer protein family. PI transfer class IIA subfamily. Interacts with PTK2B via its C-terminus. Interacts with CPNE4 (via VWFA domain). In terms of tissue distribution, highly expressed in brain, heart, ovary, testis and thymus. Detected in small intestine, prostate, pancreas, skeletal muscle, liver, colon and placenta.

Its subcellular location is the endomembrane system. Functionally, catalyzes the transfer of phosphatidylinositol and phosphatidylcholine between membranes (in vitro). Binds calcium ions. The polypeptide is Membrane-associated phosphatidylinositol transfer protein 2 (PITPNM2) (Homo sapiens (Human)).